A 1460-amino-acid polypeptide reads, in one-letter code: Venom prothrombin activator pseutarin-C non-catalytic subunit (1460 aa).

The N-terminal stretch at 1-30 (MGRYSVSPVPKCLLLMFLGWSGLKYYQVNA) is a signal peptide. The Plastocyanin-like 1 domain occupies 32–196 (QLREYHIAAQ…SGLIGALLIC (165 aa)). F5/8 type A domains lie at 32 to 330 (QLRE…LNIK) and 351 to 685 (KNWE…FLDA). Positions 124, 139, 142, and 143 each coordinate Ca(2+). Residue asparagine 156 is glycosylated (N-linked (GlcNAc...) asparagine). Cysteine 170 and cysteine 196 are oxidised to a cystine. 2 N-linked (GlcNAc...) asparagine glycosylation sites follow: asparagine 204 and asparagine 242. 3 Plastocyanin-like domains span residues 206–330 (SQKF…LNIK), 351–529 (KNWE…LLVC), and 539–685 (VQNK…FLDA). A disulfide bridge links cysteine 251 with cysteine 332. Residues asparagine 406 and asparagine 471 are each glycosylated (N-linked (GlcNAc...) asparagine). An intrachain disulfide couples cysteine 503 to cysteine 529. N-linked (GlcNAc...) asparagine glycosylation is present at asparagine 557. Disulfide bonds link cysteine 672-cysteine 1032, cysteine 966-cysteine 992, cysteine 1147-cysteine 1298, and cysteine 1303-cysteine 1457. The interval 693-818 (GNEEEEEDDG…PDDIAGRYLR (126 aa)) is b. A propeptide spans 773–818 (SFKGSVAEEELKHTALALEEDAHASDPRIDSNSARNPDDIAGRYLR) (activation peptide (connecting region)). Plastocyanin-like domains follow at residues 824–992 (NKRR…ILIC) and 1001–1143 (NRTI…FTVI). One can recognise an F5/8 type A 3 domain in the interval 824 to 1143 (NKRRYYIAAE…RGMQALFTVI (320 aa)). The Ca(2+) site is built by lysine 920, phenylalanine 935, aspartate 938, and aspartate 939. A glycan (N-linked (GlcNAc...) asparagine) is linked at asparagine 944. N-linked (GlcNAc...) asparagine glycans are attached at residues asparagine 1001 and asparagine 1180. F5/8 type C domains follow at residues 1147-1298 (CKLP…LLGC) and 1303-1457 (CSVP…LFGC).

It belongs to the multicopper oxidase family. Heterodimer of a light and a heavy chains; non-disulfide-linked. The interaction between the two chains is calcium-dependent. Found in its active form associated with pseutarin-C catalytic subunit (AC Q56VR3). In physiological conditions, blood coagulation factor V and factor Va are inactivated by activated protein C (APC) through proteolytic degradation of the heavy chain. However, pseutarin-C non-catalytic subunit (factor V-like protein) retains its full activity even at high concentration of APC. This has two explanations: this protein has only one of the three cleavage sites present in factor V that are targeted by the APC for inactivation, and the binding with the catalytic subunit protect the cleavage site from inactivation. In terms of tissue distribution, expressed by the venom gland.

It is found in the secreted. In terms of biological role, snake prothrombin activator that attacks the hemostatic system of prey. This non-catalytic subunit is functionally similar to blood coagulation factor V. It serves as a critical cofactor for the prothrombinase activity of the catalytic subunit, which is similar to the blood coagulation factor X. The complex converts prothrombin to thrombin by sequential cleavage at two positions, Arg-320 followed by Arg-271. Cleavage at Arg-320 produces an active intermediate known as meizothrombin. Meizothrombin is the 'second' substrate for prothrombinase, and it docks in an altered manner to present the second cleavage site (271). Cleavage at Arg-271 releases active thrombin from its pro-fragment. This order of events is reversed if the protease component of prothrombinase is used on its own, suggesting that the 271 site is inherently more accessible to proteolysis. The complex converts prothrombin to thrombin in presence but also in the absence of membrane. This is Venom prothrombin activator pseutarin-C non-catalytic subunit from Pseudonaja textilis (Eastern brown snake).